We begin with the raw amino-acid sequence, 138 residues long: Small ribosomal subunit protein uS9 (138 aa).

The span at 100–118 (PENRPPLKTEGYLTRDPRA) shows a compositional bias: basic and acidic residues. A disordered region spans residues 100-138 (PENRPPLKTEGYLTRDPRAKERKKYGLHKARKAPQYSKR). The segment covering 119–138 (KERKKYGLHKARKAPQYSKR) has biased composition (basic residues).

The protein belongs to the universal ribosomal protein uS9 family.

In Trichormus variabilis (strain ATCC 29413 / PCC 7937) (Anabaena variabilis), this protein is Small ribosomal subunit protein uS9.